The sequence spans 418 residues: 3-isopropylmalate dehydratase large subunit 1 (418 aa).

Residues cysteine 298, cysteine 358, and cysteine 361 each contribute to the [4Fe-4S] cluster site.

The protein belongs to the aconitase/IPM isomerase family. LeuC type 2 subfamily. Heterodimer of LeuC and LeuD. [4Fe-4S] cluster serves as cofactor.

The catalysed reaction is (2R,3S)-3-isopropylmalate = (2S)-2-isopropylmalate. It participates in amino-acid biosynthesis; L-leucine biosynthesis; L-leucine from 3-methyl-2-oxobutanoate: step 2/4. Catalyzes the isomerization between 2-isopropylmalate and 3-isopropylmalate, via the formation of 2-isopropylmaleate. The sequence is that of 3-isopropylmalate dehydratase large subunit 1 from Thermotoga maritima (strain ATCC 43589 / DSM 3109 / JCM 10099 / NBRC 100826 / MSB8).